Here is a 164-residue protein sequence, read N- to C-terminus: Phosphopantetheine adenylyltransferase (164 aa).

Residue Ser9 participates in substrate binding. ATP-binding positions include 9–10 (SF) and His17. Positions 41, 73, and 87 each coordinate substrate. ATP-binding positions include 88–90 (GLR), Glu98, and 123–129 (YSYISSS).

The protein belongs to the bacterial CoaD family. As to quaternary structure, homohexamer. Requires Mg(2+) as cofactor.

It localises to the cytoplasm. The catalysed reaction is (R)-4'-phosphopantetheine + ATP + H(+) = 3'-dephospho-CoA + diphosphate. Its pathway is cofactor biosynthesis; coenzyme A biosynthesis; CoA from (R)-pantothenate: step 4/5. Reversibly transfers an adenylyl group from ATP to 4'-phosphopantetheine, yielding dephospho-CoA (dPCoA) and pyrophosphate. In Clostridium perfringens (strain ATCC 13124 / DSM 756 / JCM 1290 / NCIMB 6125 / NCTC 8237 / Type A), this protein is Phosphopantetheine adenylyltransferase.